A 1205-amino-acid chain; its full sequence is Nitric oxide synthase 3 (1205 aa).

The tract at residues 1 to 73 (MGNLKSVGQE…PPDGPKFPRV (73 aa)) is disordered. G2 carries the N-myristoyl glycine lipid modification. 2 S-palmitoyl cysteine lipidation sites follow: C15 and C26. Residues 15–27 (CGLGLGLGLGLCG) are compositionally biased toward gly residues. A compositionally biased stretch (pro residues) spans 44–54 (LAPPPSPPPAP). Zn(2+) is bound by residues C96 and C101. Residues 100-488 (RCLGSLVFPR…TDPWKGSASK (389 aa)) are interaction with NOSIP. (6R)-L-erythro-5,6,7,8-tetrahydrobiopterin is bound at residue S104. Residue S116 is modified to Phosphoserine; by CDK5. Residue C186 coordinates heme b. L-arginine contacts are provided by Q249, W358, Y359, E363, and N368. Residues A448, W449, and F462 each contribute to the (6R)-L-erythro-5,6,7,8-tetrahydrobiopterin site. Y477 contributes to the heme b binding site. Residues 492–512 (VTRKKTFKEVANAVKISASLM) are calmodulin-binding. T497 is modified (phosphothreonine; by AMPK). Residues 522–705 (ATILYGSETG…AFGGWAQAAF (184 aa)) enclose the Flavodoxin-like domain. FMN contacts are provided by S528, E529, T530, R532, S574, and T575. Phosphoserine occurs at positions 617, 635, and 640. 4 residues coordinate FMN: S656, C663, E689, and Q693. In terms of domain architecture, FAD-binding FR-type spans 758 to 1004 (RKMVQATVLA…IRGAPSFRLP (247 aa)). Residue R778 coordinates NADP(+). Residue H800 coordinates FAD. Residues 819-850 (VEDPPPPGEPVAVEQLEKGSPGGPPPSWVRDP) form a disordered region. S838 carries the post-translational modification Phosphoserine. 9 residues coordinate FAD: R940, Y942, S943, T958, A960, Y964, V977, C978, and S979. Residues T1018, R1051, S1080, R1081, K1087, Y1089, and Q1091 each contribute to the NADP(+) site. Position 1177 is a phosphothreonine (T1177). S1179 is subject to Phosphoserine; by AMPK. At S1181 the chain carries Phosphoserine.

This sequence belongs to the NOS family. As to quaternary structure, homodimer. Interacts with NOSIP and NOSTRIN. Interacts with HSP90AB1. Forms a complex with ASL, ASS1 and SLC7A1; the complex regulates cell-autonomous L-arginine synthesis and citrulline recycling while channeling extracellular L-arginine to nitric oxide synthesis pathway. It depends on heme b as a cofactor. FAD serves as cofactor. Requires FMN as cofactor. The cofactor is (6R)-L-erythro-5,6,7,8-tetrahydrobiopterin. In terms of processing, phosphorylation by AMPK at Ser-1179 in the presence of Ca(2+)-calmodulin (CaM) activates activity. In absence of Ca(2+)-calmodulin, AMPK also phosphorylates Thr-497, resulting in inhibition of activity. Phosphorylation of Ser-116 by CDK5 reduces activity.

The protein localises to the membrane. The protein resides in the caveola. It localises to the cytoplasm. It is found in the cytoskeleton. Its subcellular location is the golgi apparatus. The protein localises to the cell membrane. The enzyme catalyses 2 L-arginine + 3 NADPH + 4 O2 + H(+) = 2 L-citrulline + 2 nitric oxide + 3 NADP(+) + 4 H2O. Stimulated by calcium/calmodulin. Inhibited by NOSIP and NOSTRIN. In terms of biological role, produces nitric oxide (NO) which is implicated in vascular smooth muscle relaxation through a cGMP-mediated signal transduction pathway. NO mediates vascular endothelial growth factor (VEGF)-induced angiogenesis in coronary vessels and promotes blood clotting through the activation of platelets. This is Nitric oxide synthase 3 (NOS3) from Canis lupus familiaris (Dog).